A 28-amino-acid polypeptide reads, in one-letter code: N-acetyl-D-galactosamine-binding lectin subunit A (28 aa).

Belongs to the ribosome-inactivating protein family. In terms of assembly, disulfide-linked heterodimer of A and B chains.

It catalyses the reaction Endohydrolysis of the N-glycosidic bond at one specific adenosine on the 28S rRNA.. Gal / GalNAc-specific lectin. Agglutinates both native and trypsin-treated rabbit erythrocytes but not human erythrocytes irrespective of blood group type. The chain is N-acetyl-D-galactosamine-binding lectin subunit A from Iris hollandica (Dutch iris).